The sequence spans 177 residues: SPbeta prophage-derived uncharacterized N-acetyltransferase YokL (177 aa).

Positions 11 to 170 constitute an N-acetyltransferase domain; it reads LTLRAIQPED…DGICFGMTRE (160 aa).

This sequence belongs to the acetyltransferase family.

The chain is SPbeta prophage-derived uncharacterized N-acetyltransferase YokL (yokL) from Bacillus subtilis (strain 168).